Here is a 432-residue protein sequence, read N- to C-terminus: Gamma-glutamyl phosphate reductase (432 aa).

Belongs to the gamma-glutamyl phosphate reductase family.

It localises to the cytoplasm. It carries out the reaction L-glutamate 5-semialdehyde + phosphate + NADP(+) = L-glutamyl 5-phosphate + NADPH + H(+). It functions in the pathway amino-acid biosynthesis; L-proline biosynthesis; L-glutamate 5-semialdehyde from L-glutamate: step 2/2. In terms of biological role, catalyzes the NADPH-dependent reduction of L-glutamate 5-phosphate into L-glutamate 5-semialdehyde and phosphate. The product spontaneously undergoes cyclization to form 1-pyrroline-5-carboxylate. The sequence is that of Gamma-glutamyl phosphate reductase from Psychrobacter sp. (strain PRwf-1).